The sequence spans 159 residues: C-type lectin BJcuL (159 aa).

The N-terminal stretch at 1 to 24 is a signal peptide; that stretch reads MGRFLFVASSACWFVFLSLSGAKG. 4 cysteine pairs are disulfide-bonded: C27–C38, C55–C155, C62–C157, and C130–C147. The C-type lectin domain occupies 34–156; the sequence is MNGLCYKIFN…CESKNAFLCQ (123 aa). Positions 120, 122, 128, 143, and 144 each coordinate Ca(2+). The Galactose-binding motif lies at 120-122; sequence QPD.

This sequence belongs to the true venom lectin family. As to quaternary structure, homodecamer of disulfide-linked dimers arranged in two 5-fold symmetric pentamers. Binds the gentamicin group of aminoglycoside antibiotics at the dimeric interface near the intermolecular disulfide bond. In terms of tissue distribution, expressed by the venom gland.

It localises to the secreted. With respect to regulation, hemagglutination activity is inhibited by lactose (MIC=2.5 mM), galactose (MIC=10 mM), and raffinose. Is very weakly or not inhibited by gentamicin, kanamycin, glucose and sucrose. Its function is as follows. Galactose-binding lectin which recognizes specific carbohydrate structures and agglutinates a variety of animal cells by binding to cell-surface glycoproteins and glycolipids. Calcium-dependent lectin. Also binds lactose and raffinose. Shows high hemagglutinating activity on mammalian erythrocytes. It also involved in immunological functions, since it is able of inducing potent neutrophil activation. In vivo, it causes edema and increases vascular permeability after injection into mouse hind paws (10-100 ug/paw). In anesthetized rats, it decreases the blood pressure by approximately 15%, with a rapid return to the resting level. Is an effective inhibitor of cell growth in some cancer cell lines, especially against renal and pancreatic cancer cell lines, human breast and ovarian carcinoma, glioblastoma and a bovine brain microvascular endothelial cell line. The chain is C-type lectin BJcuL from Bothrops jararacussu (Jararacussu).